The chain runs to 169 residues: Chorismate pyruvate-lyase (169 aa).

Substrate contacts are provided by methionine 37, arginine 79, leucine 117, and glutamate 158.

Belongs to the UbiC family. As to quaternary structure, monomer.

It localises to the cytoplasm. It catalyses the reaction chorismate = 4-hydroxybenzoate + pyruvate. It functions in the pathway cofactor biosynthesis; ubiquinone biosynthesis. Its function is as follows. Removes the pyruvyl group from chorismate, with concomitant aromatization of the ring, to provide 4-hydroxybenzoate (4HB) for the ubiquinone pathway. In Proteus mirabilis (strain HI4320), this protein is Chorismate pyruvate-lyase.